Reading from the N-terminus, the 893-residue chain is UPF0182 protein CLK_3152 (893 aa).

The next 7 membrane-spanning stretches (helical) occupy residues 9-29, 49-69, 94-114, 154-174, 202-222, 246-266, and 273-293; these read IPLFIIILFIAFFNKIINFII, AIIILMIPIFIIFFISIWMYY, LFFIFNFIVSIFLAYIFSSSY, VIISLLLFLVITTFIAYFILE, LAIVSGLIILFISFGHLIKIW, FYKIIVVITLISSIVTLLSIV, and VSICIGITIFLIVSQNIASFL.

The protein belongs to the UPF0182 family.

Its subcellular location is the cell membrane. This is UPF0182 protein CLK_3152 from Clostridium botulinum (strain Loch Maree / Type A3).